We begin with the raw amino-acid sequence, 431 residues long: Enolase (431 aa).

Gln-167 contributes to the (2R)-2-phosphoglycerate binding site. Residue Glu-209 is the Proton donor of the active site. Mg(2+) is bound by residues Asp-246, Glu-290, and Asp-317. Lys-342, Arg-371, Ser-372, and Lys-393 together coordinate (2R)-2-phosphoglycerate. The active-site Proton acceptor is the Lys-342.

The protein belongs to the enolase family. As to quaternary structure, component of the RNA degradosome, a multiprotein complex involved in RNA processing and mRNA degradation. It depends on Mg(2+) as a cofactor.

The protein resides in the cytoplasm. It localises to the secreted. It is found in the cell surface. The enzyme catalyses (2R)-2-phosphoglycerate = phosphoenolpyruvate + H2O. The protein operates within carbohydrate degradation; glycolysis; pyruvate from D-glyceraldehyde 3-phosphate: step 4/5. Catalyzes the reversible conversion of 2-phosphoglycerate (2-PG) into phosphoenolpyruvate (PEP). It is essential for the degradation of carbohydrates via glycolysis. This Enterobacter sp. (strain 638) protein is Enolase.